Consider the following 317-residue polypeptide: MNNNKVIKKVTVVGAGFVGSTTAYTLMLSGLISEIVLIDINAKKADGEVMDLNHGMPFVRPVEIYRGDYKDCAGSDIVIITAGANQKEGETRIDLVKRNTEVFKNIINEIVKYNNDCILLVVTNPVDILTYVTYKLSGFPKNKVIGSGTVLDTARFRYLLSEHVKVDARNVHAYIIGEHGDTEVAAWSLANIAGIPMDRYCDECHQCEEQISRNKIYESVKNAAYEIIRNKGATYYAVALAVRRIVEAIVRNENSILTVSSLLEGQYGLSDVCLSVPTIVGVNGIEEILNVPFNDEEIQLLRKSGNTLKEIIKTLDI.

NAD(+) contacts are provided by residues V18, D39, K44, Y69, and G83–A84. Substrate-binding positions include Q86, R92, and N124 to D127. NAD(+) is bound by residues V122–N124 and S147. Residue D152–R155 participates in substrate binding. Beta-D-fructose 1,6-bisphosphate contacts are provided by R157 and H172. The active-site Proton acceptor is H179. The residue at position 225 (Y225) is a Phosphotyrosine. T234 lines the substrate pocket.

This sequence belongs to the LDH/MDH superfamily. LDH family. In terms of assembly, homotetramer.

It is found in the cytoplasm. It catalyses the reaction (S)-lactate + NAD(+) = pyruvate + NADH + H(+). Its pathway is fermentation; pyruvate fermentation to lactate; (S)-lactate from pyruvate: step 1/1. With respect to regulation, allosterically activated by fructose 1,6-bisphosphate (FBP). Functionally, catalyzes the conversion of lactate to pyruvate. The sequence is that of L-lactate dehydrogenase from Acetivibrio thermocellus (strain ATCC 27405 / DSM 1237 / JCM 9322 / NBRC 103400 / NCIMB 10682 / NRRL B-4536 / VPI 7372) (Clostridium thermocellum).